The sequence spans 297 residues: NAD(P)-dependent methylenetetrahydromethanopterin dehydrogenase (297 aa).

The protein to M.extorquens MtdA. Homohexamer.

It localises to the cytoplasm. The enzyme catalyses 5,10-methylenetetrahydromethanopterin + NAD(+) = 5,10-methenyl-5,6,7,8-tetrahydromethanopterin + NADH. It catalyses the reaction 5,10-methylenetetrahydromethanopterin + NADP(+) = 5,10-methenyl-5,6,7,8-tetrahydromethanopterin + NADPH. It functions in the pathway one-carbon metabolism; formaldehyde degradation; formate from formaldehyde (H(4)MPT route): step 2/5. In terms of biological role, catalyzes the dehydrogenation of methylene-H(4)MPT. In Methylorubrum extorquens (strain ATCC 14718 / DSM 1338 / JCM 2805 / NCIMB 9133 / AM1) (Methylobacterium extorquens), this protein is NAD(P)-dependent methylenetetrahydromethanopterin dehydrogenase (mtdB).